Reading from the N-terminus, the 249-residue chain is MQTSSRTYDYRRLKAEYKQLSASSSTDKAMHRLREAVHAVNILLPTPITLEMALLSADGVRKLVRGQSLARTYSACLRNLECLSRHVPGRGNPGLDAVVETHRENAQRVADTCAAALLHMYMSIGTGRTDAFVEHAIQLTAATETAMSDIALVERALGLTHPHNERSPASMDESTGMKNCAVLSHMNDNKDDAVNMEPGYNTTIDRLISSPLLSQSKRERTIISTPAVTPKDNCPPVKFSRENNLITEL.

It belongs to the herpesviridae UL51 family. Oligomerizes. Interacts with MDV019; this interaction mediates MDV019 incorporation to virions. In terms of processing, phosphorylated.

The protein resides in the virion tegument. It localises to the host cytoplasm. The protein localises to the host Golgi apparatus. Plays several roles during the time course of infection, including egress of virus particles from the perinuclear space and secondary envelopment of cytoplasmic capsids that bud into specific trans-Golgi network (TGN)-derived membranes. The protein is Tegument protein UL51 homolog (MDV065) of Gallus gallus (Chicken).